A 293-amino-acid polypeptide reads, in one-letter code: Coatomer subunit epsilon-2 (293 aa).

The protein belongs to the COPE family. Oligomeric complex that consists of at least the alpha, beta, beta', gamma, delta, epsilon and zeta subunits.

Its subcellular location is the cytoplasm. It localises to the golgi apparatus membrane. The protein resides in the cytoplasmic vesicle. The protein localises to the COPI-coated vesicle membrane. Its function is as follows. The coatomer is a cytosolic protein complex that binds to dilysine motifs and reversibly associates with Golgi non-clathrin-coated vesicles, which further mediate biosynthetic protein transport from the ER, via the Golgi up to the trans Golgi network. The coatomer complex is required for budding from Golgi membranes, and is essential for the retrograde Golgi-to-ER transport of dilysine-tagged proteins. The protein is Coatomer subunit epsilon-2 of Arabidopsis thaliana (Mouse-ear cress).